The primary structure comprises 1114 residues: Lysylphosphatidylglycerol biosynthesis bifunctional protein LysX (1114 aa).

Residues 1–11 (MSASTETHHAS) show a composition bias toward basic and acidic residues. A disordered region spans residues 1–26 (MSASTETHHASEAAVPTAPRPRPGLG). The phosphatidylglycerol lysyltransferase stretch occupies residues 1-618 (MSASTETHHA…GLHSDGSAPG (618 aa)). A run of 6 helical transmembrane segments spans residues 38–58 (IAGLILGVFSVLVFLWSISPV), 77–97 (APDTSLSWALVVALLAAALAS), 101–121 (IAWWLLTIYLVLFLITNVIVS), 126–146 (NVNAMAAAVVQVVLIGILIAA), 164–184 (GVLIVGLAIGTLLGWGLVELF), and 219–239 (FVNTLLGLFGAIALLAAVITL). The lysine--tRNA ligase stretch occupies residues 619-1114 (EGLAPTATGP…LAFPLAKPRQ (496 aa)). A DNA-binding region (OB) is located at residues 674-751 (VRIAGRLLRI…LSLLANEWRM (78 aa)). Mg(2+) is bound by residues aspartate 1025 and glutamate 1032.

The protein in the N-terminal section; belongs to the LPG synthetase family. It in the C-terminal section; belongs to the class-II aminoacyl-tRNA synthetase family. Mg(2+) is required as a cofactor.

It is found in the cell membrane. The enzyme catalyses tRNA(Lys) + L-lysine + ATP = L-lysyl-tRNA(Lys) + AMP + diphosphate. The catalysed reaction is L-lysyl-tRNA(Lys) + a 1,2-diacyl-sn-glycero-3-phospho-(1'-sn-glycerol) = a 1,2-diacyl-sn-glycero-3-phospho-1'-(3'-O-L-lysyl)-sn-glycerol + tRNA(Lys). Functionally, catalyzes the production of L-lysyl-tRNA(Lys)transfer and the transfer of a lysyl group from L-lysyl-tRNA(Lys) to membrane-bound phosphatidylglycerol (PG), which produces lysylphosphatidylglycerol (LPG), one of the components of the bacterial membrane with a positive net charge. LPG synthesis contributes to the resistance to cationic antimicrobial peptides (CAMPs) and likely protects M.tuberculosis against the CAMPs produced by competiting microorganisms (bacteriocins). In fact, the modification of anionic phosphatidylglycerol with positively charged L-lysine results in repulsion of the peptides. The polypeptide is Lysylphosphatidylglycerol biosynthesis bifunctional protein LysX (lysX) (Rhodococcus jostii (strain RHA1)).